The sequence spans 136 residues: Cancer/testis antigen 62 (136 aa).

The tract at residues 1 to 22 is disordered; the sequence is MMHTTSYRRLSPPHLTDQPSAY.

Testis specific. Expressed in cancer cell lines.

This chain is Cancer/testis antigen 62 (CT62), found in Homo sapiens (Human).